A 31-amino-acid chain; its full sequence is GLDLGLSRGFSGSQAAKHLMGLAAANYAGGP.

Proline amide is present on P31.

This sequence belongs to the diuretic hormone class 2 family.

The protein localises to the secreted. Its function is as follows. Regulation of fluid secretion. Stimulates primary urine secretion by Malpighian tubules and causes a dose-dependent stimulation of cAMP levels in the tubules. Has a nonselective effect on Na(+)/K(+) ion transport. In vitro, primarily elevates intracellular Ca(2+). The chain is Diuretic hormone class 2 from Apis mellifera (Honeybee).